A 240-amino-acid polypeptide reads, in one-letter code: Ribose-5-phosphate isomerase (240 aa).

Substrate-binding positions include 34–37, 88–91, and 101–104; these read SGST, DGAD, and KGGG. Glu110 acts as the Proton acceptor in catalysis. Lys128 is a binding site for substrate.

Belongs to the ribose 5-phosphate isomerase family.

It is found in the cytoplasm. It carries out the reaction aldehydo-D-ribose 5-phosphate = D-ribulose 5-phosphate. Its pathway is carbohydrate degradation; pentose phosphate pathway; D-ribose 5-phosphate from D-ribulose 5-phosphate (non-oxidative stage): step 1/1. Involved in the first step of the non-oxidative branch of the pentose phosphate pathway. It catalyzes the reversible conversion of ribose-5-phosphate to ribulose 5-phosphate. The chain is Ribose-5-phosphate isomerase (RKI1) from Candida albicans (strain SC5314 / ATCC MYA-2876) (Yeast).